An 874-amino-acid polypeptide reads, in one-letter code: Alanine--tRNA ligase (874 aa).

The Zn(2+) site is built by His-562, His-566, Cys-665, and His-669.

This sequence belongs to the class-II aminoacyl-tRNA synthetase family. Zn(2+) serves as cofactor.

The protein localises to the cytoplasm. It carries out the reaction tRNA(Ala) + L-alanine + ATP = L-alanyl-tRNA(Ala) + AMP + diphosphate. Its function is as follows. Catalyzes the attachment of alanine to tRNA(Ala) in a two-step reaction: alanine is first activated by ATP to form Ala-AMP and then transferred to the acceptor end of tRNA(Ala). Also edits incorrectly charged Ser-tRNA(Ala) and Gly-tRNA(Ala) via its editing domain. This Pseudomonas paraeruginosa (strain DSM 24068 / PA7) (Pseudomonas aeruginosa (strain PA7)) protein is Alanine--tRNA ligase.